We begin with the raw amino-acid sequence, 310 residues long: Low affinity immunoglobulin gamma Fc region receptor II-b (310 aa).

An N-terminal signal peptide occupies residues 1 to 42 (MGILSFLPVLATESDWADCKSPQPWGHMLLWTAVLFLAPVAG). The Extracellular segment spans residues 43 to 217 (TPAAPPKAVL…KPVTITVQAP (175 aa)). Ig-like C2-type domains lie at 48-127 (PKAV…VHLT) and 131-213 (EWLV…VTIT). 2 disulfide bridges follow: C71–C113 and C152–C196. N106, N180, and N187 each carry an N-linked (GlcNAc...) asparagine glycan. A helical transmembrane segment spans residues 218-240 (SSSPMGIIVAVVTGIAVAAIVAA). Topologically, residues 241–310 (VVALIYCRKK…LEEPDDQNRI (70 aa)) are cytoplasmic. The ITIM motif signature appears at 290–295 (ITYSLL). Phosphotyrosine; by SRC-type Tyr-kinases is present on Y292.

Interacts with INPP5D/SHIP1. Interacts with FGR. Interacts with LYN. As to quaternary structure, (Microbial infection) Isoform IIB1 interacts with measles virus protein N. Protein N is released in the blood following lysis of measles infected cells. This interaction presumably block inflammatory immune response. In terms of processing, phosphorylated by the SRC-type Tyr-kinases LYN and BLK. As to expression, is the most broadly distributed Fc-gamma-receptor. Expressed in monocyte, neutrophils, macrophages, basophils, eosinophils, Langerhans cells, B-cells, platelets cells and placenta (endothelial cells). Not detected in natural killer cells.

It localises to the cell membrane. Its function is as follows. Receptor for the Fc region of complexed or aggregated immunoglobulins gamma. Low affinity receptor. Involved in a variety of effector and regulatory functions such as phagocytosis of immune complexes and modulation of antibody production by B-cells. Binding to this receptor results in down-modulation of previous state of cell activation triggered via antigen receptors on B-cells (BCR), T-cells (TCR) or via another Fc receptor. Isoform IIB1 fails to mediate endocytosis or phagocytosis. Isoform IIB2 does not trigger phagocytosis. This Homo sapiens (Human) protein is Low affinity immunoglobulin gamma Fc region receptor II-b (FCGR2B).